A 184-amino-acid chain; its full sequence is GTP-binding protein Rheb (184 aa).

Lys-8 is covalently cross-linked (Glycyl lysine isopeptide (Lys-Gly) (interchain with G-Cter in ubiquitin)). GDP is bound by residues Ser-16, Val-17, Gly-18, Lys-19, Ser-20, Ser-21, Val-32, and Asp-33. GTP-binding residues include Ser-16, Val-17, Gly-18, Lys-19, Ser-20, Ser-21, Val-32, Asp-33, Tyr-35, Pro-37, Thr-38, Gly-63, Asn-119, Lys-120, and Asp-122. A Mg(2+)-binding site is contributed by Ser-20. An Effector region motif is present at residues 35–43 (YDPTIENTF). Residue Thr-38 participates in Mg(2+) binding. Asn-119 is a binding site for GDP. Asp-122 serves as a coordination point for GDP. Ser-130 bears the Phosphoserine; by MAPKAPK5 mark. Residue Ala-150 coordinates GDP. Ala-150 serves as a coordination point for GTP. At Cys-181 the chain carries Cysteine methyl ester. Cys-181 carries S-farnesyl cysteine lipidation. Residues 182–184 (SVM) constitute a propeptide, removed in mature form.

It belongs to the small GTPase superfamily. Rheb family. As to quaternary structure, associates with the mTORC1 complex (MTOR, MLST8 and RPTOR) in a guanyl nucleotide-independent manner. Interacts with TSC2. Interacts with MCRS1; the interaction maintains RHEB at the lysosome in its active GTP-bound form and prevents its interaction with the mTORC1 complex inhibitor TSC2, ensuring activation of the mTORC1 complex by RHEB. Interacts (when prenylated) with PDE6D; this promotes release from membranes. Post-translationally, farnesylation is important for efficiently activating mTORC1-mediated signaling. In terms of processing, polyubiquitinated in response to amino acid, promoting its interaction with MTOR and mTORC1 activation. Deubiquitination by ATXN3 promotes recruitment of the TSC-TBC complex and RHEB inactivation by TSC2. Monoubiquitinated at Lys-8 by RNF152, promoting its association with the TSC-TBC complex. Deubiquitinated at Lys-8 by USP4, promoting mTORC1 activation. Phosphorylation by MAPKAPK5 impairs GTP-binding and inactivation.

The protein resides in the endomembrane system. The protein localises to the lysosome membrane. It localises to the golgi apparatus membrane. Its subcellular location is the endoplasmic reticulum membrane. It is found in the cytoplasm. The protein resides in the cytosol. The enzyme catalyses GTP + H2O = GDP + phosphate + H(+). With respect to regulation, alternates between an inactive form bound to GDP and an active form bound to GTP. Inactivated by the TSC-TBC complex via the GTPase activating protein (GAP) domain of TSC2. Autoinhibited by Tyr-35, which constrains the active site conformation, restricting the access of the catalytic Asp-65 to the nucleotide-binding pocket. Its function is as follows. Small GTPase that acts as an allosteric activator of the canonical mTORC1 complex, an evolutionarily conserved central nutrient sensor that stimulates anabolic reactions and macromolecule biosynthesis to promote cellular biomass generation and growth. In response to nutrients, growth factors or amino acids, specifically activates the protein kinase activity of MTOR, the catalytic component of the mTORC1 complex: acts by causing a conformational change that allows the alignment of residues in the active site of MTOR, thereby enhancing the phosphorylation of ribosomal protein S6 kinase (RPS6KB1 and RPS6KB2) and EIF4EBP1 (4E-BP1). RHEB is also required for localization of the TSC-TBC complex to lysosomal membranes. In response to starvation, RHEB is inactivated by the TSC-TBC complex, preventing activation of mTORC1. Has low intrinsic GTPase activity. In Mus musculus (Mouse), this protein is GTP-binding protein Rheb.